Reading from the N-terminus, the 339-residue chain is Protein FAM50A (339 aa).

The disordered stretch occupies residues Met1–Met31. The residue at position 2 (Ala2) is an N-acetylalanine. Lys100 is covalently cross-linked (Glycyl lysine isopeptide (Lys-Gly) (interchain with G-Cter in SUMO2)). The disordered stretch occupies residues Ser121–Asn177. Residues Leu124–Arg146 are compositionally biased toward acidic residues. The Nuclear localization signal signature appears at Lys152 to Lys155. The segment covering Pro168 to Asn177 has biased composition (basic and acidic residues).

This sequence belongs to the FAM50 family. Interacts with EFTUD2, a component of the spliceosome U5 complex. Interacts with DDX41, a component of the spliceosome C complex. In terms of tissue distribution, widely expressed in fetal and adult tissues. Mostly abundant in fetal brain, liver and kidney; in the adult, high levels were also observed in heart, skeletal muscle, spleen, thymus, prostate and small intestine. Expressed in fetal cerebellum and hypothalamus. Low expression is observed in fetal temporal lobe.

Its subcellular location is the nucleus. Probably involved in the regulation of pre-mRNA splicing. This Homo sapiens (Human) protein is Protein FAM50A (FAM50A).